Consider the following 454-residue polypeptide: Probable mitochondrial saccharopine dehydrogenase-like oxidoreductase At5g39410 (454 aa).

The residue at position 1 (Met1) is an N-acetylmethionine. A disordered region spans residues 215-234 (RRSRPRRPRPTICGPPAKGP).

This sequence belongs to the saccharopine dehydrogenase family.

It localises to the mitochondrion membrane. In Arabidopsis thaliana (Mouse-ear cress), this protein is Probable mitochondrial saccharopine dehydrogenase-like oxidoreductase At5g39410.